The sequence spans 466 residues: ATP synthase subunit beta (466 aa).

148-155 contacts ATP; that stretch reads GGAGVGKT.

Belongs to the ATPase alpha/beta chains family. In terms of assembly, F-type ATPases have 2 components, CF(1) - the catalytic core - and CF(0) - the membrane proton channel. CF(1) has five subunits: alpha(3), beta(3), gamma(1), delta(1), epsilon(1). CF(0) has three main subunits: a(1), b(2) and c(9-12). The alpha and beta chains form an alternating ring which encloses part of the gamma chain. CF(1) is attached to CF(0) by a central stalk formed by the gamma and epsilon chains, while a peripheral stalk is formed by the delta and b chains.

The protein resides in the cell inner membrane. The catalysed reaction is ATP + H2O + 4 H(+)(in) = ADP + phosphate + 5 H(+)(out). Its function is as follows. Produces ATP from ADP in the presence of a proton gradient across the membrane. The catalytic sites are hosted primarily by the beta subunits. The sequence is that of ATP synthase subunit beta from Herminiimonas arsenicoxydans.